The following is a 119-amino-acid chain: Protein TusC (119 aa).

This sequence belongs to the DsrF/TusC family. In terms of assembly, heterohexamer, formed by a dimer of trimers. The hexameric TusBCD complex contains 2 copies each of TusB, TusC and TusD. The TusBCD complex interacts with TusE.

The protein resides in the cytoplasm. In terms of biological role, part of a sulfur-relay system required for 2-thiolation of 5-methylaminomethyl-2-thiouridine (mnm(5)s(2)U) at tRNA wobble positions. The polypeptide is Protein TusC (Escherichia coli O45:K1 (strain S88 / ExPEC)).